Reading from the N-terminus, the 119-residue chain is Non-structural protein 3b (119 aa).

The 82-residue stretch at 2-83 (DYVSLLNQFW…ARLICEQLQA (82 aa)) folds into the DRBM domain.

As to quaternary structure, interacts with host RUNX1 isoform b.

The protein localises to the host nucleus. It is found in the host nucleolus. Its subcellular location is the host mitochondrion. Its function is as follows. Induces host cell G0/G1 arrest and apoptosis. This is Non-structural protein 3b from Tylonycteris pachypus (Lesser bamboo bat).